A 404-amino-acid polypeptide reads, in one-letter code: Mitochondrial potassium channel (404 aa).

A mitochondrion-targeting transit peptide spans methionine 1–threonine 30. Over leucine 31–lysine 196 the chain is Mitochondrial matrix. Serine 65 carries the post-translational modification Phosphoserine. Residues valine 111 to aspartate 138 are a coiled coil. The helical transmembrane segment at asparagine 197–valine 217 threads the bilayer. The Mitochondrial intermembrane portion of the chain corresponds to asparagine 218–valine 380. Residues tyrosine 381–phenylalanine 401 traverse the membrane as a helical segment. Residues arginine 402–serine 404 are Mitochondrial matrix-facing.

In terms of assembly, the mitochondrial potassium channel (mitoK(ATP)) forms a heteromultimer.

The protein resides in the mitochondrion inner membrane. It carries out the reaction K(+)(in) = K(+)(out). With respect to regulation, channel activity inhibited by ATP via ABCB8/MITOSUR subunit. Its function is as follows. Pore-forming subunit of the mitochondrial ATP-gated potassium channel (mitoK(ATP)). Together with ATP-binding subunit ABCB8/MITOSUR of the mitoK(ATP) channel, mediates ATP-dependent K(+) currents across the mitochondrial inner membrane. An increase in ATP intracellular levels closes the channel, inhibiting K(+) transport, whereas a decrease in ATP levels enhances K(+) uptake in the mitochondrial matrix. May contribute to the homeostatic control of cellular metabolism under stress conditions by regulating the mitochondrial matrix volume. In Bos taurus (Bovine), this protein is Mitochondrial potassium channel.